We begin with the raw amino-acid sequence, 398 residues long: Candidapepsin-3 (398 aa).

Residues 1 to 18 (MFLKNIFIALAIALLADA) form the signal peptide. Residues 19–58 (TPTTSNNSPGFVALNFDVIKTHKNVTGPQGEINTNVNVKR) constitute a propeptide, activation peptide. N-linked (GlcNAc...) asparagine glycosylation occurs at N42. Residues 72–384 (YASDITVGSN…DLDDNEISLA (313 aa)) enclose the Peptidase A1 domain. The active site involves D90. 90 to 92 (DTG) is a binding site for pepstatin A. A compositionally biased stretch (polar residues) spans 103 to 112 (VSCQAGQGQD). Residues 103–139 (VSCQAGQGQDPNFCKNEGTYSPSSSSSSQNLNSPFSI) form a disordered region. A disulfide bridge links C105 with C116. Positions 123–138 (SPSSSSSSQNLNSPFS) are enriched in low complexity. Pepstatin A is bound by residues 140–143 (EYGD) and 274–278 (DSGTT). Residue D274 is part of the active site. An intrachain disulfide couples C312 to C350. The N-linked (GlcNAc...) asparagine glycan is linked to N313.

It belongs to the peptidase A1 family. O-glycosylated.

The protein localises to the secreted. It catalyses the reaction Preferential cleavage at the carboxyl of hydrophobic amino acids, but fails to cleave 15-Leu-|-Tyr-16, 16-Tyr-|-Leu-17 and 24-Phe-|-Phe-25 of insulin B chain. Activates trypsinogen, and degrades keratin.. This chain is Candidapepsin-3 (SAP3), found in Candida albicans (strain WO-1) (Yeast).